The primary structure comprises 560 residues: MASSTALICDTEAWKDLKGHVEDIKKTHLRDLMSDANRCQSMMMEFDGLLLDYSRQRATVETMDKLLNLAKASQLTEKISRMFNGEHINSTENRSVLHVALRAPKDAVIKADGMNVVPEVWNVLDKIKEFSDKIRSGSWVGATGKPLKDVIAIGIGGSFLGPLFVHTALQTDPEALESAKGRQLRFLANIDPVDVARNISGLNPETTLVVVVSKTFTTAETMLNARTLREWITAALGASAVAKHMVAVSTNLALVEKFGIDPNNAFAFWDWVGGRYSVCSAVGVLPLSLQYGFSMVEKFLKGASSIDQHFQSTPFEKNIPVLLGLLSVWNVSFLGYPARAILPYSQALEKFAPHIQQVSMESNGKGVSIDGLPLPFETGEIDFGEPGTNGQHSFYQLIHQGRVIPCDFIGIVKSQQPVYLKGEVVSNHDELMSNFFAQPDALAYGKTPEQLQKENVSENLIPHKTFSGNRPSLSLLLPELTAYNVGQLLAIYEHRVAVQGFVWGINSFDQWGVELGKVLATQVRKQLHSSRTQGTAPEGFNYSTTTLLKRYLETSSEPQM.

Residue A2 is modified to N-acetylalanine. The Proton donor role is filled by E361. Catalysis depends on residues H392 and K517.

It belongs to the GPI family. In terms of assembly, homodimer.

It is found in the cytoplasm. It catalyses the reaction alpha-D-glucose 6-phosphate = beta-D-fructose 6-phosphate. It functions in the pathway carbohydrate degradation; glycolysis; D-glyceraldehyde 3-phosphate and glycerone phosphate from D-glucose: step 2/4. Inhibited by glycerol-3-P (G3P). The protein is Glucose-6-phosphate isomerase, cytosolic (PGIC) of Arabidopsis thaliana (Mouse-ear cress).